The chain runs to 43 residues: DeltaKappa-actitoxin-Avd4b (43 aa).

3 disulfide bridges follow: C4–C39, C6–C32, and C22–C40.

It belongs to the sea anemone type 3 (BDS) potassium channel toxin family.

The protein resides in the secreted. Its subcellular location is the nematocyst. In terms of biological role, acts as a gating modifier on both Kv and Nav ion channels. Voltage-dependently inhibits voltage-gated potassium channels Kv3 (Kv3.1/KCNC1, Kv3.2/KCNC2 and Kv3.4/KCNC4). Slows inactivation of the voltage-gated sodium channel Nav1.7/SCN9A. Inhibits all Kv3.1, Kv3.2 and Kv3.4 by about 50% when tested at a voltage of +40 mV. May act by binding residues in voltage-sensing domains S3b and S4 of Kv3. Tests have been done on human Nav1.7/SCN9A and rat SCG neurons that mostly carry Nav1.7 channels (EC(50)=300 nM). This toxin also reduces blood pressure. This is DeltaKappa-actitoxin-Avd4b from Anemonia sulcata (Mediterranean snakelocks sea anemone).